The following is a 435-amino-acid chain: Serine--tRNA ligase (435 aa).

An L-serine-binding site is contributed by 237–239 (TAE). 268-270 (RSE) lines the ATP pocket. Glutamate 291 contacts L-serine. ATP is bound at residue 355–358 (EISS). Serine 390 lines the L-serine pocket.

The protein belongs to the class-II aminoacyl-tRNA synthetase family. Type-1 seryl-tRNA synthetase subfamily. Homodimer. The tRNA molecule binds across the dimer.

It localises to the cytoplasm. It carries out the reaction tRNA(Ser) + L-serine + ATP = L-seryl-tRNA(Ser) + AMP + diphosphate + H(+). It catalyses the reaction tRNA(Sec) + L-serine + ATP = L-seryl-tRNA(Sec) + AMP + diphosphate + H(+). It functions in the pathway aminoacyl-tRNA biosynthesis; selenocysteinyl-tRNA(Sec) biosynthesis; L-seryl-tRNA(Sec) from L-serine and tRNA(Sec): step 1/1. Its function is as follows. Catalyzes the attachment of serine to tRNA(Ser). Is also able to aminoacylate tRNA(Sec) with serine, to form the misacylated tRNA L-seryl-tRNA(Sec), which will be further converted into selenocysteinyl-tRNA(Sec). This Lactobacillus acidophilus (strain ATCC 700396 / NCK56 / N2 / NCFM) protein is Serine--tRNA ligase.